We begin with the raw amino-acid sequence, 1135 residues long: Vinculin (1135 aa).

The interval 2 to 835 is N-terminal globular head; the sequence is PVFHTRTIES…GAVAKVREAF (834 aa). Phosphotyrosine is present on Tyr-100. Residues 168 to 208 form a talin-interaction region; sequence MTKMAKMIDERQQELTHQEHRVMLVNSMNTVKELLPVLISA. Tandem repeats lie at residues 259-369, 370-479, and 480-589. The tract at residues 259-589 is 3 X 112 AA tandem repeats; that stretch reads ASKDTEAMKR…LKDLKARMQE (331 aa). Residues Tyr-537 and Tyr-822 each carry the phosphotyrosine modification. Positions 836-878 are linker (Pro-rich); it reads QPQEPDFPPPPPDLEHLHLTDELAPPKPPLPEGEVPPPRPPPP. Residues 837–888 are disordered; it reads PQEPDFPPPPPDLEHLHLTDELAPPKPPLPEGEVPPPRPPPPEEKDEEFPEQ. The segment covering 860–876 has biased composition (pro residues); the sequence is PPKPPLPEGEVPPPRPP. A C-terminal tail region spans residues 879–1135; it reads EEKDEEFPEQ…RWVRKTPWYQ (257 aa). Facilitates phospholipid membrane insertion stretches follow at residues 1004–1047 and 1121–1135; these read RLVR…KRIR and AGFTLRWVRKTPWYQ. Tyr-1134 bears the Phosphotyrosine; by SRC-type Tyr-kinases mark.

This sequence belongs to the vinculin/alpha-catenin family. Exhibits self-association properties. Interacts with APBB1IP, NRAP and TLN1. Interacts with CTNNB1 and this interaction is necessary for its localization to the cell-cell junctions and for its function in regulating cell surface expression of E-cadherin. In terms of processing, phosphorylated; on serines, threonines and tyrosines. Phosphorylation on Tyr-1134 in activated platelets affects head-tail interactions and cell spreading but has no effect on actin binding nor on localization to focal adhesion plaques. Acetylated; mainly by myristic acid but also by a small amount of palmitic acid. Isoform Metavinculin is muscle-specific.

The protein localises to the cell membrane. It localises to the cell junction. Its subcellular location is the adherens junction. It is found in the focal adhesion. The protein resides in the cytoplasm. The protein localises to the cytoskeleton. It localises to the sarcolemma. Its subcellular location is the cell projection. It is found in the podosome. Its function is as follows. Actin filament (F-actin)-binding protein involved in cell-matrix adhesion and cell-cell adhesion. Regulates cell-surface E-cadherin expression and potentiates mechanosensing by the E-cadherin complex. May also play important roles in cell morphology and locomotion. The sequence is that of Vinculin (VCL) from Gallus gallus (Chicken).